Reading from the N-terminus, the 54-residue chain is Hemolytic toxin (54 aa).

The tract at residues 3 to 12 (ALAGTIIAGA) is plays an important role in the hemolytic activity. An N-terminal region region spans residues 11–30 (GASLGFQILDKVLGELGKVS).

The protein belongs to the actinoporin family. Sea anemone subfamily. Octamer or nonamer in membranes. Monomer in the soluble state.

It is found in the secreted. Its subcellular location is the nematocyst. The protein resides in the target cell membrane. Its function is as follows. Pore-forming protein that forms cations-selective hydrophilic pores of around 1 nm and causes cytolysis. Pore formation is a multi-step process that involves specific recognition of membrane sphingomyelin (but neither cholesterol nor phosphatidylcholine) using aromatic rich region and adjacent phosphocholine (POC) binding site, firm binding to the membrane (mainly driven by hydrophobic interactions) accompanied by the transfer of the N-terminal region to the lipid-water interface and finally pore formation after oligomerization of monomers. The protein is Hemolytic toxin of Heteractis magnifica (Magnificent sea anemone).